We begin with the raw amino-acid sequence, 303 residues long: MVDPQLDGPQLAALAAVVELGSFDAAAERLHVTPSAVSQRIKSLEQQVGQVLVVREKPCRATTAGIPLLRLAAQTALLESEALAEMGGNASLKRTRITIAVNADSMATWFSAVFDGLGDVLLDVRIEDQDHSARLLREGVAMGAVTTERNPVPGCRVHPLGEMRYLPVASRPFVQRHLSDGFTAAAAAKAPSLAWNRDDGLQDMLVRKAFRRAITRPTHFVPTTEGFTAAARAGLGWGMFPEKLAASPLADGSFVRVCDIHLDVPLYWQCWKLDSPIIARITDTVRAAASGLYRGQQRRRRPG.

Residues 6–62 (LDGPQLAALAAVVELGSFDAAAERLHVTPSAVSQRIKSLEQQVGQVLVVREKPCRAT) form the HTH lysR-type domain. Positions 23 to 42 (FDAAAERLHVTPSAVSQRIK) form a DNA-binding region, H-T-H motif.

The protein belongs to the LysR transcriptional regulatory family. In terms of assembly, homodimer.

Functionally, positively regulates the expression of the exporter LysE and represses its own expression. The sequence is that of HTH-type transcriptional regulator LysG from Mycobacterium bovis (strain ATCC BAA-935 / AF2122/97).